Here is a 191-residue protein sequence, read N- to C-terminus: 7-methyl-GTP pyrophosphatase (191 aa).

Aspartate 70 functions as the Proton acceptor in the catalytic mechanism.

Belongs to the Maf family. YceF subfamily. A divalent metal cation serves as cofactor.

It localises to the cytoplasm. It catalyses the reaction N(7)-methyl-GTP + H2O = N(7)-methyl-GMP + diphosphate + H(+). In terms of biological role, nucleoside triphosphate pyrophosphatase that hydrolyzes 7-methyl-GTP (m(7)GTP). May have a dual role in cell division arrest and in preventing the incorporation of modified nucleotides into cellular nucleic acids. The chain is 7-methyl-GTP pyrophosphatase from Xanthomonas oryzae pv. oryzae (strain KACC10331 / KXO85).